The sequence spans 296 residues: Homoserine kinase (296 aa).

85-95 (PLSRGLGSSAA) is an ATP binding site.

Belongs to the GHMP kinase family. Homoserine kinase subfamily.

The protein localises to the cytoplasm. The catalysed reaction is L-homoserine + ATP = O-phospho-L-homoserine + ADP + H(+). Its pathway is amino-acid biosynthesis; L-threonine biosynthesis; L-threonine from L-aspartate: step 4/5. Catalyzes the ATP-dependent phosphorylation of L-homoserine to L-homoserine phosphate. The chain is Homoserine kinase from Clostridium acetobutylicum (strain ATCC 824 / DSM 792 / JCM 1419 / IAM 19013 / LMG 5710 / NBRC 13948 / NRRL B-527 / VKM B-1787 / 2291 / W).